The primary structure comprises 278 residues: Ribosomal RNA small subunit methyltransferase A (278 aa).

The S-adenosyl-L-methionine site is built by N27, L29, G54, E75, D95, and N118.

This sequence belongs to the class I-like SAM-binding methyltransferase superfamily. rRNA adenine N(6)-methyltransferase family. RsmA subfamily.

The protein localises to the cytoplasm. It carries out the reaction adenosine(1518)/adenosine(1519) in 16S rRNA + 4 S-adenosyl-L-methionine = N(6)-dimethyladenosine(1518)/N(6)-dimethyladenosine(1519) in 16S rRNA + 4 S-adenosyl-L-homocysteine + 4 H(+). Its function is as follows. Specifically dimethylates two adjacent adenosines (A1518 and A1519) in the loop of a conserved hairpin near the 3'-end of 16S rRNA in the 30S particle. May play a critical role in biogenesis of 30S subunits. The chain is Ribosomal RNA small subunit methyltransferase A from Chlamydia caviae (strain ATCC VR-813 / DSM 19441 / 03DC25 / GPIC) (Chlamydophila caviae).